Here is a 182-residue protein sequence, read N- to C-terminus: MFANFRNCFKIKNSRLIYDNINKCLLTKEETNQLLKFIHLKWKPAKDQVQISFSRSSGPGGQNVNKLNTKVIVNLPFKQLESCIPMFLINHFKTCEMLRNYRIQNGIKIYSQKTRSQHKNIEDALNKISDLLNKSAETLYVPDTPPEKIARISILKKESNEKRLSEKKYKQKKKTQRRITMD.

Residues glutamate 161–aspartate 182 form a disordered region. A compositionally biased stretch (basic residues) spans tyrosine 169–aspartate 182.

Belongs to the prokaryotic/mitochondrial release factor family.

The protein resides in the mitochondrion. Its function is as follows. Has a role in meiosis. In Schizosaccharomyces pombe (strain 972 / ATCC 24843) (Fission yeast), this protein is Meiotically up-regulated gene 82 protein (mug82).